A 288-amino-acid chain; its full sequence is 4-diphosphocytidyl-2-C-methyl-D-erythritol kinase (288 aa).

K8 is a catalytic residue. 90 to 100 (PVGAGLAGGSS) is an ATP binding site. The active site involves D132.

This sequence belongs to the GHMP kinase family. IspE subfamily.

It catalyses the reaction 4-CDP-2-C-methyl-D-erythritol + ATP = 4-CDP-2-C-methyl-D-erythritol 2-phosphate + ADP + H(+). It functions in the pathway isoprenoid biosynthesis; isopentenyl diphosphate biosynthesis via DXP pathway; isopentenyl diphosphate from 1-deoxy-D-xylulose 5-phosphate: step 3/6. Its function is as follows. Catalyzes the phosphorylation of the position 2 hydroxy group of 4-diphosphocytidyl-2C-methyl-D-erythritol. In Chlamydia trachomatis serovar A (strain ATCC VR-571B / DSM 19440 / HAR-13), this protein is 4-diphosphocytidyl-2-C-methyl-D-erythritol kinase.